Consider the following 267-residue polypeptide: 4-hydroxy-tetrahydrodipicolinate reductase (267 aa).

Residues 12 to 17 (GPRGRM), 100 to 102 (GTT), and 126 to 129 (APNF) contribute to the NAD(+) site. The active-site Proton donor/acceptor is His156. His157 contributes to the (S)-2,3,4,5-tetrahydrodipicolinate binding site. Lys160 functions as the Proton donor in the catalytic mechanism. 166 to 167 (GT) serves as a coordination point for (S)-2,3,4,5-tetrahydrodipicolinate.

Belongs to the DapB family.

The protein localises to the cytoplasm. It catalyses the reaction (S)-2,3,4,5-tetrahydrodipicolinate + NAD(+) + H2O = (2S,4S)-4-hydroxy-2,3,4,5-tetrahydrodipicolinate + NADH + H(+). It carries out the reaction (S)-2,3,4,5-tetrahydrodipicolinate + NADP(+) + H2O = (2S,4S)-4-hydroxy-2,3,4,5-tetrahydrodipicolinate + NADPH + H(+). It participates in amino-acid biosynthesis; L-lysine biosynthesis via DAP pathway; (S)-tetrahydrodipicolinate from L-aspartate: step 4/4. In terms of biological role, catalyzes the conversion of 4-hydroxy-tetrahydrodipicolinate (HTPA) to tetrahydrodipicolinate. The sequence is that of 4-hydroxy-tetrahydrodipicolinate reductase from Bacillus velezensis (strain DSM 23117 / BGSC 10A6 / LMG 26770 / FZB42) (Bacillus amyloliquefaciens subsp. plantarum).